A 263-amino-acid chain; its full sequence is HLA class II histocompatibility antigen, DM beta chain (263 aa).

Residues 1-18 (MITFLPLLLGLSLGCTGA) form the signal peptide. Residues 19–112 (GGFVAHVEST…PFWGSLTNRT (94 aa)) are beta-1. The Lumenal segment spans residues 19–218 (GGFVAHVEST…PGLSPMQTLK (200 aa)). 2 cysteine pairs are disulfide-bonded: C29–C97 and C43–C53. N-linked (GlcNAc...) asparagine glycosylation occurs at N110. Residues 113–207 (RPPSVQVAKT…GAPEPILRDW (95 aa)) form a beta-2 region. In terms of domain architecture, Ig-like C1-type spans 114–208 (PPSVQVAKTT…APEPILRDWT (95 aa)). Residues C135 and C192 are joined by a disulfide bond. The interval 208 to 218 (TPGLSPMQTLK) is connecting peptide. The chain crosses the membrane as a helical span at residues 219 to 239 (VSVSAVTLGLGLIIFSLGVIS). The Cytoplasmic segment spans residues 240–263 (WRRAGHSSYTPLPGSNYSEGWHIS). The YXXZ motif signature appears at 248–251 (YTPL).

It belongs to the MHC class II family. Heterodimer of an alpha chain (DMA) and a beta chain (DMB). Interacts with MHCII; this interaction mediates rapid selection of high-affinity peptides in a pH-dependent manner, with an optimum at pH 5.5.

It localises to the late endosome membrane. The protein localises to the lysosome membrane. Its function is as follows. Plays a critical role in catalyzing the release of class II-associated invariant chain peptide (CLIP) from newly synthesized MHC class II molecules and freeing the peptide binding site for acquisition of antigenic peptides. In B-cells, the interaction between HLA-DM and MHC class II molecules is regulated by HLA-DO. This chain is HLA class II histocompatibility antigen, DM beta chain (HLA-DMB), found in Homo sapiens (Human).